We begin with the raw amino-acid sequence, 274 residues long: ATP synthase subunit a (274 aa).

5 consecutive transmembrane segments (helical) span residues 43–63 (TLNI…LYVF), 103–123 (VIAP…VMDL), 144–164 (VVPT…FVLI), 223–243 (LIFI…LSLP), and 245–265 (AIFH…LTIV).

Belongs to the ATPase A chain family. F-type ATPases have 2 components, CF(1) - the catalytic core - and CF(0) - the membrane proton channel. CF(1) has five subunits: alpha(3), beta(3), gamma(1), delta(1), epsilon(1). CF(0) has three main subunits: a(1), b(2) and c(9-12). The alpha and beta chains form an alternating ring which encloses part of the gamma chain. CF(1) is attached to CF(0) by a central stalk formed by the gamma and epsilon chains, while a peripheral stalk is formed by the delta and b chains.

It is found in the cell inner membrane. Key component of the proton channel; it plays a direct role in the translocation of protons across the membrane. In Photorhabdus laumondii subsp. laumondii (strain DSM 15139 / CIP 105565 / TT01) (Photorhabdus luminescens subsp. laumondii), this protein is ATP synthase subunit a.